The sequence spans 541 residues: Probable malate:quinone oxidoreductase (541 aa).

The tract at residues 520-541 (AKPAAGAAQQAKPAKATADIAL) is disordered.

The protein belongs to the MQO family. Requires FAD as cofactor.

It catalyses the reaction (S)-malate + a quinone = a quinol + oxaloacetate. It functions in the pathway carbohydrate metabolism; tricarboxylic acid cycle; oxaloacetate from (S)-malate (quinone route): step 1/1. This Ralstonia nicotianae (strain ATCC BAA-1114 / GMI1000) (Ralstonia solanacearum) protein is Probable malate:quinone oxidoreductase.